We begin with the raw amino-acid sequence, 446 residues long: Ribosomal protein uS12 methylthiotransferase RimO (446 aa).

The 111-residue stretch at 6–116 folds into the MTTase N-terminal domain; that stretch reads PNIGFISLGC…VMQQVHKYVP (111 aa). [4Fe-4S] cluster contacts are provided by Cys15, Cys51, Cys80, Cys148, Cys152, and Cys155. The Radical SAM core domain occupies 134–375; it reads LTPKHYAYLK…MQLQQEISAA (242 aa). One can recognise a TRAM domain in the interval 378 to 446; it reads QQKVGKVFTV…AYDLYASLIN (69 aa).

Belongs to the methylthiotransferase family. RimO subfamily. Requires [4Fe-4S] cluster as cofactor.

The protein resides in the cytoplasm. It carries out the reaction L-aspartate(89)-[ribosomal protein uS12]-hydrogen + (sulfur carrier)-SH + AH2 + 2 S-adenosyl-L-methionine = 3-methylsulfanyl-L-aspartate(89)-[ribosomal protein uS12]-hydrogen + (sulfur carrier)-H + 5'-deoxyadenosine + L-methionine + A + S-adenosyl-L-homocysteine + 2 H(+). In terms of biological role, catalyzes the methylthiolation of an aspartic acid residue of ribosomal protein uS12. The polypeptide is Ribosomal protein uS12 methylthiotransferase RimO (Pasteurella multocida (strain Pm70)).